The following is a 394-amino-acid chain: Elongation factor Tu (394 aa).

One can recognise a tr-type G domain in the interval 10–204 (KPHVNVGTIG…ALDTYIPEPE (195 aa)). A G1 region spans residues 19–26 (GHVDHGKT). 19–26 (GHVDHGKT) provides a ligand contact to GTP. Mg(2+) is bound at residue Thr-26. The segment at 60-64 (GITIN) is G2. Residues 81-84 (DCPG) form a G3 region. GTP contacts are provided by residues 81 to 85 (DCPGH) and 136 to 139 (NKCD). The G4 stretch occupies residues 136 to 139 (NKCD). Residues 174–176 (SAL) form a G5 region.

This sequence belongs to the TRAFAC class translation factor GTPase superfamily. Classic translation factor GTPase family. EF-Tu/EF-1A subfamily. Monomer.

It is found in the cytoplasm. It catalyses the reaction GTP + H2O = GDP + phosphate + H(+). Its function is as follows. GTP hydrolase that promotes the GTP-dependent binding of aminoacyl-tRNA to the A-site of ribosomes during protein biosynthesis. This Colwellia psychrerythraea (strain 34H / ATCC BAA-681) (Vibrio psychroerythus) protein is Elongation factor Tu.